A 269-amino-acid polypeptide reads, in one-letter code: UPF0329 protein ECU04_1660 (269 aa).

Over residues 1–12 (MEERERGKEKGS) the composition is skewed to basic and acidic residues. Positions 1 to 74 (MEERERGKEK…SPKEKSKGEE (74 aa)) are disordered. Residues 13 to 23 (KGKGRKKRGKK) are compositionally biased toward basic residues. Positions 24–36 (GAGEAKEESKEED) are enriched in basic and acidic residues. The segment covering 37 to 51 (RGEEEEESVEADVPV) has biased composition (acidic residues).

Belongs to the UPF0329 family.

This Encephalitozoon cuniculi (strain GB-M1) (Microsporidian parasite) protein is UPF0329 protein ECU04_1660.